Here is a 246-residue protein sequence, read N- to C-terminus: MASVSSKIFAITGGASGIGAATCRLLAKRGAATLCVGDLCSENMKQLENDIKEINPNTKVHCTVLDVSSSSNVDEWIKDIITTFGDLHGAANIAGIAQGAGLRQAPTILEEDDQQWKKVFQVNLDGVLYSTRAQVRAMKESSSTNPGDRSIVNVASIASMSHMPDVFAYGTSKAGCAYFTTCVSQDVMPFGIRANTVSPEEVEETYKKEGFSVIEADDVARTIVWLLSEDSRPVFGANINVGACMP.

Residues 1-20 form the signal peptide; that stretch reads MASVSSKIFAITGGASGIGA. The NADP(+) site is built by I18, D66, R132, Y169, and K173. The Proton donor role is filled by Y169. K173 acts as the Lowers pKa of active site Tyr in catalysis.

The protein belongs to the short-chain dehydrogenases/reductases (SDR) family. As to quaternary structure, homotetramer.

The enzyme catalyses chanoclavine-I + NAD(+) = chanoclavine-I aldehyde + NADH + H(+). It participates in alkaloid biosynthesis; ergot alkaloid biosynthesis. Functionally, chanoclavine-I dehydrogenase; part of the gene cluster that mediates the biosynthesis of fungal ergot alkaloid. DmaW catalyzes the first step of ergot alkaloid biosynthesis by condensing dimethylallyl diphosphate (DMAP) and tryptophan to form 4-dimethylallyl-L-tryptophan. The second step is catalyzed by the methyltransferase easF that methylates 4-dimethylallyl-L-tryptophan in the presence of S-adenosyl-L-methionine, resulting in the formation of 4-dimethylallyl-L-abrine. The catalase easC and the FAD-dependent oxidoreductase easE then transform 4-dimethylallyl-L-abrine to chanoclavine-I which is further oxidized by easD in the presence of NAD(+), resulting in the formation of chanoclavine-I aldehyde. Chanoclavine-I aldehyde is the precursor of ergoamides and ergopeptines in Clavicipitaceae, and clavine-type alcaloids such as fumiclavine in Trichocomaceae. However, the metabolites downstream of chanoclavine-I aldehyde in Arthrodermataceae have not been identified yet. This chain is Chanoclavine-I dehydrogenase easD, found in Arthroderma benhamiae (strain ATCC MYA-4681 / CBS 112371) (Trichophyton mentagrophytes).